We begin with the raw amino-acid sequence, 395 residues long: Multidrug resistance protein MdtL (395 aa).

The next 12 helical transmembrane spans lie at 4–24, 42–62, 69–89, 93–113, 131–151, 158–178, 217–237, 247–267, 271–291, 295–315, 328–350, and 355–377; these read FLLC…MYLV, IAFS…GKIA, PVAI…SRAS, LFLS…VVAF, LLNG…HLIM, SLFY…LFIL, VSVI…VMGF, ALTA…LGLF, TLML…SLAH, VTLF…GVAM, VASS…LAAI, and AMNM…IFSV.

It belongs to the major facilitator superfamily. DHA1 family. MdtL (TC 2.A.1.2.22) subfamily.

It is found in the cell inner membrane. This is Multidrug resistance protein MdtL from Salmonella newport (strain SL254).